The primary structure comprises 604 residues: MLLKELSSLASPLSQPQVEKLKQLTAELNAVQLAWVSGYLAATANASGNLAQLAPVSDAPAAQTVTILYGSQTGNGRGIAKALAEKAKAQGYSVNLASMGEYNVRQLKQETLLLLVVSTHGEGEAPDDAIELHKFLASKRAPQLNNLHYSVLALGDSSYEFFCQTGKDFDARLSALGAKALLPLVECDVDYEAAAGQWHADVLTAVKPLIQTTANVVALNDTGSAQVASESEFTKQNPYSAEVLVSQKITGRGSDRDVRHVEIDLGESGLRYEVGDALGVWFSNNETLVDEILAGLGLAADATVTVGNESINLKQALIEKKELTQLYPGLVKAWAELSASPELLAISEDKEQVRQFILHHQFADLVANYQLKADANLDANKLVELLRPLTPRLYSIASSQSEVDTEVHLTVALVEDEHQGQARFGGASHFLASAEEGAEVKVYVEPNKHFRLPEDPQTPVIMIGPGTGVAPFRAFMQERVAQGAEGDSWLFFGNPHFEQDFLYQTEWQQYLKNGDLTRIDVAFSRDQAHKIYVQHRIKEQGQTLWQWLQNGAHLYICGDAERMAKDVHQALLAVAVEFGGLSSEAAEEYFETLRSHKRYQKDVY.

The region spanning 65–203 (VTILYGSQTG…AAGQWHADVL (139 aa)) is the Flavodoxin-like domain. FMN is bound by residues 71-76 (SQTGNG), 118-121 (STHG), and 154-163 (LGDSSYEFFC). An FAD-binding FR-type domain is found at 236 to 453 (QNPYSAEVLV…VEPNKHFRLP (218 aa)). Residues Thr324, Leu358, 392–395 (RLYS), 410–412 (TVA), and 425–428 (GGAS) each bind FAD. NADP(+)-binding positions include 524 to 525 (SR), 530 to 534 (KIYVQ), and Asp566. Tyr604 is a binding site for FAD.

This sequence belongs to the NADPH-dependent sulphite reductase flavoprotein subunit CysJ family. It in the N-terminal section; belongs to the flavodoxin family. The protein in the C-terminal section; belongs to the flavoprotein pyridine nucleotide cytochrome reductase family. In terms of assembly, alpha(8)-beta(8). The alpha component is a flavoprotein, the beta component is a hemoprotein. The cofactor is FAD. It depends on FMN as a cofactor.

The enzyme catalyses hydrogen sulfide + 3 NADP(+) + 3 H2O = sulfite + 3 NADPH + 4 H(+). Its pathway is sulfur metabolism; hydrogen sulfide biosynthesis; hydrogen sulfide from sulfite (NADPH route): step 1/1. Functionally, component of the sulfite reductase complex that catalyzes the 6-electron reduction of sulfite to sulfide. This is one of several activities required for the biosynthesis of L-cysteine from sulfate. The flavoprotein component catalyzes the electron flow from NADPH -&gt; FAD -&gt; FMN to the hemoprotein component. The sequence is that of Sulfite reductase [NADPH] flavoprotein alpha-component from Shewanella sp. (strain ANA-3).